The primary structure comprises 139 residues: Actin-depolymerizing factor 3 (139 aa).

The 133-residue stretch at 7 to 139 folds into the ADF-H domain; it reads GVAVNDECML…SLDEIKDRAR (133 aa).

It belongs to the actin-binding proteins ADF family. Expressed in all tissues except pollen.

Its subcellular location is the cytoplasm. Actin-depolymerizing protein. Severs actin filaments (F-actin) and binds to actin monomers. This Zea mays (Maize) protein is Actin-depolymerizing factor 3 (ADF3).